Reading from the N-terminus, the 337-residue chain is Ornithine carbamoyltransferase, catabolic (337 aa).

Carbamoyl phosphate is bound by residues 57-60 (STRT), glutamine 84, arginine 108, and 135-138 (HPTQ). Residues asparagine 167, aspartate 231, and 235–236 (SM) each bind L-ornithine. Carbamoyl phosphate contacts are provided by residues 272–273 (CL) and arginine 317.

The protein belongs to the aspartate/ornithine carbamoyltransferase superfamily. OTCase family.

It localises to the cytoplasm. It carries out the reaction carbamoyl phosphate + L-ornithine = L-citrulline + phosphate + H(+). It participates in amino-acid degradation; L-arginine degradation via ADI pathway; carbamoyl phosphate from L-arginine: step 2/2. Reversibly catalyzes the transfer of the carbamoyl group from carbamoyl phosphate (CP) to the N(epsilon) atom of ornithine (ORN) to produce L-citrulline. The protein is Ornithine carbamoyltransferase, catabolic of Streptococcus ratti.